Here is a 115-residue protein sequence, read N- to C-terminus: Large ribosomal subunit protein bL19 (115 aa).

The protein belongs to the bacterial ribosomal protein bL19 family.

This protein is located at the 30S-50S ribosomal subunit interface and may play a role in the structure and function of the aminoacyl-tRNA binding site. The polypeptide is Large ribosomal subunit protein bL19 (Buchnera aphidicola subsp. Schizaphis graminum (strain Sg)).